The chain runs to 435 residues: MAKFDLTAKNCQYLDRHLTFPLLEFLLQKDIYDQTSLLKFILQTVSKTNMVDYTMDIRERLNMGDELPEELSKRRANVLVKLKELQTEVAPLMKCMEELKNPDSMKDSKSIVHALQQEFDFKHDIIKSAQKLAKYLYECGNYRDSISYLYICLLVMEPADKNYLTVLWGKLAAEILVLNWPTALEDLTRLRDFIDNHNFSPIEVLQQRTWLIHWSVLVFFNHAKGRDLIIEMFLYKPLYLNAIQTMCPHILRYLATAVIINRGRRNALKDLIKIIQQESYTYRDPITEFLEHLYVNFDFEGARMKLHECQTVIVNDFFIIGCLQEFIENARLMIFETFCRIHQCITIGMLADKLNMEPDEAECWIVNLIRNARLDAKIDSKLGHVVMGTQPLSPYQQLVEKIDSLSVRSEALTVLVERKQKAKTQESGEGNWKYY.

The PCI domain occupies 219–392 (FFNHAKGRDL…GHVVMGTQPL (174 aa)).

It belongs to the eIF-3 subunit E family. As to quaternary structure, component of the eukaryotic translation initiation factor 3 (eIF-3) complex.

Its subcellular location is the cytoplasm. Component of the eukaryotic translation initiation factor 3 (eIF-3) complex, which is involved in protein synthesis of a specialized repertoire of mRNAs and, together with other initiation factors, stimulates binding of mRNA and methionyl-tRNAi to the 40S ribosome. The eIF-3 complex specifically targets and initiates translation of a subset of mRNAs involved in cell proliferation. In Aedes aegypti (Yellowfever mosquito), this protein is Eukaryotic translation initiation factor 3 subunit E (eIF3-S6).